The sequence spans 289 residues: Ribosomal RNA small subunit methyltransferase I (289 aa).

Belongs to the methyltransferase superfamily. RsmI family.

It is found in the cytoplasm. The enzyme catalyses cytidine(1402) in 16S rRNA + S-adenosyl-L-methionine = 2'-O-methylcytidine(1402) in 16S rRNA + S-adenosyl-L-homocysteine + H(+). Functionally, catalyzes the 2'-O-methylation of the ribose of cytidine 1402 (C1402) in 16S rRNA. This Helicobacter pylori (strain J99 / ATCC 700824) (Campylobacter pylori J99) protein is Ribosomal RNA small subunit methyltransferase I.